A 416-amino-acid chain; its full sequence is MDKFQIQGNGPLKGEIRISGAKNAALPILCAGLLTADTVTIGNVPDLQDTRTMLKLLRQMGMKAEMVDGVATLQGADINSPEASYDLVKTMRASILVLGPLVARFGEARVSLPGGCGIGARPVDQHIKGLQAMGAEITIEHGFIHARANRLKGARVVTDMITVTGTENLLMAATLAEGETVLENAAREPEVTDLAELLVKMGAKIEGIGTDRLVVQGVDRLHGAEHKVVADRIEAGTFLCAAAATLGDIVLRGIPPLILDAVLIKLREAGATVETGDDWIRLAMPQRAQAVSFRTSEYPAFPTDMQAQFMALNAVAEGTARITETIFENRFMHVQELNRLGANITAEGNTAVVTGVPRLSGASVMATDLRASASLVIAGLVADGETVIDRIYHLDRGYDRMENKLSAVGAKILRIS.

Phosphoenolpyruvate is bound at residue 22–23; sequence KN. A UDP-N-acetyl-alpha-D-glucosamine-binding site is contributed by R92. C116 acts as the Proton donor in catalysis. C116 is modified (2-(S-cysteinyl)pyruvic acid O-phosphothioketal). Residues 121–125, D304, and I326 each bind UDP-N-acetyl-alpha-D-glucosamine; that span reads RPVDQ.

Belongs to the EPSP synthase family. MurA subfamily.

It localises to the cytoplasm. The enzyme catalyses phosphoenolpyruvate + UDP-N-acetyl-alpha-D-glucosamine = UDP-N-acetyl-3-O-(1-carboxyvinyl)-alpha-D-glucosamine + phosphate. The protein operates within cell wall biogenesis; peptidoglycan biosynthesis. In terms of biological role, cell wall formation. Adds enolpyruvyl to UDP-N-acetylglucosamine. This is UDP-N-acetylglucosamine 1-carboxyvinyltransferase from Cupriavidus metallidurans (strain ATCC 43123 / DSM 2839 / NBRC 102507 / CH34) (Ralstonia metallidurans).